We begin with the raw amino-acid sequence, 412 residues long: NF-kappa-B essential modulator (412 aa).

Positions 1-48 are disordered; that stretch reads MSRHLWKNQLSEMVQPSGGPAEDQDMLGEESSLGKPAMLHLPSEQGTP. The interval 1–197 is required for interaction with and ubiquitination by MARCHF2; the sequence is MSRHLWKNQL…REVLQQQHSV (197 aa). Ser-31 and Ser-43 each carry phosphoserine; by IKKB. The tract at residues 44-111 is interaction with CHUK/IKBKB; that stretch reads EQGTPETLQR…KLVERLSLEK (68 aa). A coiled-coil region spans residues 49 to 343; sequence ETLQRCLEEN…NKLKVGCHES (295 aa). Residue Ser-68 is modified to Phosphoserine. A Phosphoserine; by ATM modification is found at Ser-85. Glycyl lysine isopeptide (Lys-Gly) (interchain with G-Cter in ubiquitin) cross-links involve residues Lys-111, Lys-139, Lys-143, Lys-226, and Lys-246. The segment at 150–250 is interaction with TANK; it reads LGELQESQSR…YDSHIKSSKG (101 aa). The segment at 242–343 is ubiquitin-binding (UBAN); that stretch reads DSHIKSSKGM…NKLKVGCHES (102 aa). A self-association region spans residues 246–358; that stretch reads KSSKGMQLED…MRKRHVETSQ (113 aa). Positions 249 to 412 are required for interaction with TNFAIP3; it reads KGMQLEDLRQ…LQIHVMECIE (164 aa). Lys-270 is covalently cross-linked (Glycyl lysine isopeptide (Lys-Gly) (interchain with G-Cter in SUMO); alternate). Residue Lys-270 forms a Glycyl lysine isopeptide (Lys-Gly) (interchain with G-Cter in ubiquitin); alternate linkage. Glycyl lysine isopeptide (Lys-Gly) (interchain with G-Cter in ubiquitin) cross-links involve residues Lys-276, Lys-278, Lys-285, and Lys-295. Lys-302 is covalently cross-linked (Glycyl lysine isopeptide (Lys-Gly) (interchain with G-Cter in SUMO); alternate). Residue Lys-302 forms a Glycyl lysine isopeptide (Lys-Gly) (interchain with G-Cter in ubiquitin); alternate linkage. Glycyl lysine isopeptide (Lys-Gly) (interchain with G-Cter in ubiquitin) cross-links involve residues Lys-314 and Lys-319. A leucine-zipper region spans residues 315–336; the sequence is LVERKELLQEQLEQLQREFNKL. A Phosphoserine; by IKKB modification is found at Ser-369. The tract at residues 375-412 is interaction with CYLD; that stretch reads SNQRRSPPEEPPDFCCPKCQYQAPDMDTLQIHVMECIE. The residue at position 380 (Ser-380) is a Phosphoserine. The CCHC NOA-type zinc finger occupies 382-412; it reads PEEPPDFCCPKCQYQAPDMDTLQIHVMECIE. Cys-390 contributes to the Zn(2+) binding site. Lys-392 is covalently cross-linked (Glycyl lysine isopeptide (Lys-Gly) (interchain with G-Cter in ubiquitin)). 3 residues coordinate Zn(2+): Cys-393, His-406, and Cys-410.

In terms of assembly, homodimer; disulfide-linked. Component of the I-kappa-B-kinase (IKK) core complex consisting of CHUK, IKBKB and IKBKG; probably four alpha/CHUK-beta/IKBKB dimers are associated with four gamma/IKBKG subunits. The IKK core complex seems to associate with regulatory or adapter proteins to form a IKK-signalosome holo-complex. The IKK complex associates with TERF2IP/RAP1, leading to promote IKK-mediated phosphorylation of RELA/p65. Part of a complex composed of NCOA2, NCOA3, CHUK/IKKA, IKBKB, IKBKG and CREBBP. Interacts with COPS3, CYLD, NALP2, TRPC4AP and PIDD1. Interacts with ATM; the complex is exported from the nucleus. Interacts with TRAF6. Interacts with IKBKE. Interacts with TANK; the interaction is enhanced by IKBKE and TBK1. Part of a ternary complex consisting of TANK, IKBKB and IKBKG. Interacts with ZFAND5. Interacts with RIPK2. Interacts with TNIP1 and TNFAIP3; TNIP1 facilitates the TNFAIP3-mediated de-ubiquitination of IKBKG. Interacts with TNFAIP3; the interaction is induced by TNF stimulation and by polyubiquitin. Binds (via UBAN region) polyubiquitin; binds both 'Lys-63'-linked and linear polyubiquitin, with higher affinity for linear ubiquitin. Interacts with NLRP10. Interacts with TANK; this interaction increases in response to DNA damage. Interacts with USP10; this interaction increases in response to DNA damage. Interacts with ZC3H12A; this interaction increases in response to DNA damage. Interacts with IFIT5; the interaction synergizes the recruitment of IKK to MAP3K7 and enhances IKK phosphorylation. Interacts with TRIM29; this interaction induces IKBKG/NEMO ubiquitination and proteolytic degradation. Interacts with TRIM13; this interaction leads to IKBKG/NEMO ubiquitination. Interacts with ARFIP2. Interacts with RIPK1. Interacts with (ubiquitinated) BCL10; interaction with polyubiquitinated BCL10 via both 'Lys-63'-linked and linear ubiquitin is required for TCR-induced NF-kappa-B activation. Interacts with MARCHF2; during the late stages of macrophage viral and bacterial infection; the interaction leads to ubiquitination and degradation of IKBKG/NEMO. Phosphorylation at Ser-68 attenuates aminoterminal homodimerization. In terms of processing, polyubiquitinated on Lys-278 via 'Lys-63'-linked ubiquitin; the ubiquitination is mediated downstream of NOD2 and RIPK2 and probably plays a role in signaling by facilitating interactions with ubiquitin domain-containing proteins and activates the NF-kappa-B pathway. Polyubiquitinated on Lys-278 and Lys-302 through 'Lys-63'-linked ubiquitin; the ubiquitination is mediated by BCL10, MALT1 and TRAF6 and probably plays a role in signaling by facilitating interactions with ubiquitin domain-containing proteins and activates the NF-kappa-B pathway. Monoubiquitinated on Lys-270 and Lys-302; promotes nuclear export. Polyubiquitinated through 'Lys-27' by TRIM23; involved in antiviral innate and inflammatory responses. Linear polyubiquitinated on Lys-111, Lys-143, Lys-226, Lys-246, Lys-270, Lys-278, Lys-285, Lys-295, Lys-302 and Lys-319; the head-to-tail polyubiquitination is mediated by the LUBAC complex and plays a key role in NF-kappa-B activation. Deubiquitinated by USP10 in a TANK-dependent and -independent manner, leading to the negative regulation of NF-kappa-B signaling upon DNA damage. Ubiquitinated at Lys-319 by MARCHF2 following bacterial and viral infection which leads to its degradation. Polyubiquitinated via 'Lys-29'-linked ubiquitin; leading to lysosomal degradation. Post-translationally, sumoylated on Lys-270 and Lys-302 with SUMO1; the modification results in phosphorylation of Ser-85 by ATM leading to a replacement of the sumoylation by mono-ubiquitination on these residues. Neddylated by TRIM40, resulting in stabilization of NFKBIA and down-regulation of NF-kappa-B activity.

It is found in the cytoplasm. The protein resides in the nucleus. Functionally, regulatory subunit of the IKK core complex which phosphorylates inhibitors of NF-kappa-B thus leading to the dissociation of the inhibitor/NF-kappa-B complex and ultimately the degradation of the inhibitor. Its binding to scaffolding polyubiquitin plays a key role in IKK activation by multiple signaling receptor pathways. Can recognize and bind both 'Lys-63'-linked and linear polyubiquitin upon cell stimulation, with a much highr affinity for linear polyubiquitin. Could be implicated in NF-kappa-B-mediated protection from cytokine toxicity. Essential for viral activation of IRF3. Involved in TLR3- and IFIH1-mediated antiviral innate response; this function requires 'Lys-27'-linked polyubiquitination. This is NF-kappa-B essential modulator (Ikbkg) from Rattus norvegicus (Rat).